The following is a 293-amino-acid chain: 4-hydroxy-tetrahydrodipicolinate synthase (293 aa).

Thr-44 serves as a coordination point for pyruvate. Tyr-132 functions as the Proton donor/acceptor in the catalytic mechanism. The active-site Schiff-base intermediate with substrate is Lys-161. Ile-205 contributes to the pyruvate binding site.

It belongs to the DapA family. As to quaternary structure, homotetramer; dimer of dimers.

The protein localises to the cytoplasm. The enzyme catalyses L-aspartate 4-semialdehyde + pyruvate = (2S,4S)-4-hydroxy-2,3,4,5-tetrahydrodipicolinate + H2O + H(+). The protein operates within amino-acid biosynthesis; L-lysine biosynthesis via DAP pathway; (S)-tetrahydrodipicolinate from L-aspartate: step 3/4. In terms of biological role, catalyzes the condensation of (S)-aspartate-beta-semialdehyde [(S)-ASA] and pyruvate to 4-hydroxy-tetrahydrodipicolinate (HTPA). The chain is 4-hydroxy-tetrahydrodipicolinate synthase from Thermosipho africanus (strain TCF52B).